The primary structure comprises 436 residues: MYHPRELYPSLGTGYRLGHPQPGADSTFPPALTEGYRYPDLDTSKLDCFLSGIEAAPHTLAAAAPLPLLPSALGPETAPPPPEALHSLPGVSLSLENQELWKEFSAVGTEMIITKAGRRMFPACRVSVTGLDPEARYLFLLDVVPVDGARYRWQGQHWEPSGKAEPRLPDRVYIHPDSPATGAHWMRQPVSFHRVKLTNSTLDPHGHLILHSMHKYQPRIHLVRATQLCSQHWGGVASFRFPETTFISVTAYQNPRITQLKIAANPFAKGFRENGRNCKRERDARVKRKLRGPEPVATEACGSGDTPGGPCDSTLGGDIRDSDPEQAPTPQEAASASAPPCGGPSAEAYLLHPAAFHGAPSHLPARTPSFAEAPDPGRPAPYSAAFLDLQPGPGGSAYQAAPSVPSFAPHFIQGGPFPLPYPGPGGYLDMGSKPMY.

The segment at residues Leu100–Glu273 is a DNA-binding region (T-box). Residues Asn274–Ala284 are compositionally biased toward basic and acidic residues. Disordered regions lie at residues Asn274–Pro344 and Pro360–Ser383. Low complexity predominate over residues Glu332–Pro344.

The protein localises to the nucleus. Its function is as follows. T-box transcription factor that plays an essential role in the determination of the fate of axial stem cells: neural vs mesodermal. Acts in part by down-regulating, a specific enhancer (N1) of SOX2, to inhibit neural development. Seems to play also an essential role in left/right axis determination and acts through effects on Notch signaling around the node as well as through an effect on the morphology and motility of the nodal cilia. The sequence is that of T-box transcription factor TBX6 (Tbx6) from Mus musculus (Mouse).